Consider the following 427-residue polypeptide: Lipophilic envelope-spanning tunnel protein A (427 aa).

Residues 1–75 (MALNTPQITP…LTRLAAMAFT (75 aa)) are Cytoplasmic-facing. The helical transmembrane segment at 76–96 (MLLLMPFAWGEPLLHIWLLGI) threads the bilayer. Residues 97–120 (RIDANVMQGIWQMTKQGDAITGSM) lie on the Periplasmic side of the membrane. The chain crosses the membrane as a helical span at residues 121-141 (VFFCVIGAPLILVTSIAYLWF). At 142–269 (GNRLGMNLRP…RHSLQKCWAA (128 aa)) the chain is on the cytoplasmic side. The helical transmembrane segment at 270-290 (LLASIVLLLPANLLPISIIYL) threads the bilayer. Topologically, residues 291–310 (NGGRQEDTILSGIMSLASSN) are periplasmic. A helical membrane pass occupies residues 311–331 (IAVAGIVFIASILVPFTKVIV). The Cytoplasmic segment spans residues 332 to 350 (MFTLLLSIHFKCQQGLRTR). The helical transmembrane segment at 351 to 371 (ILLLRMVTWIGRWSMLDLFVI) threads the bilayer. Topologically, residues 372–382 (SLTMSLINRDQ) are periplasmic. A helical transmembrane segment spans residues 383 to 403 (ILAFTMGPAAFYFGAAVILTI). Residues 404–427 (LAVEWLDSRLLWDAHESGNARFDD) lie on the Cytoplasmic side of the membrane.

The protein belongs to the PqiA family. As to quaternary structure, may interact with LetB in the inner membrane.

The protein localises to the cell inner membrane. Its function is as follows. Could be part, together with LetB, of a system that transports lipids between the inner membrane and the outer membrane. Contributes to membrane integrity. This chain is Lipophilic envelope-spanning tunnel protein A, found in Escherichia coli (strain K12).